The following is a 155-amino-acid chain: Putative pre-16S rRNA nuclease (155 aa).

It belongs to the YqgF nuclease family.

The protein localises to the cytoplasm. Functionally, could be a nuclease involved in processing of the 5'-end of pre-16S rRNA. The protein is Putative pre-16S rRNA nuclease of Xanthomonas oryzae pv. oryzae (strain MAFF 311018).